The primary structure comprises 467 residues: Chromosomal replication initiator protein DnaA (467 aa).

Residues 1–90 form a domain I, interacts with DnaA modulators region; it reads MSLSLWQQCL…KPVTQTPQAA (90 aa). Residues 91–130 form a domain II region; it reads VTSNVAAPAQVAQTQPQRAAPSTRSGWDNVPAPAEPTYRS. A compositionally biased stretch (low complexity) spans 98-111; that stretch reads PAQVAQTQPQRAAP. Residues 98–119 form a disordered region; the sequence is PAQVAQTQPQRAAPSTRSGWDN. Positions 131–347 are domain III, AAA+ region; that stretch reads NVNVKHTFDN…GALNRVIANA (217 aa). ATP-binding residues include G175, G177, K178, and T179. The tract at residues 348–467 is domain IV, binds dsDNA; sequence NFTGRAITID…FSNLIRTLSS (120 aa).

It belongs to the DnaA family. In terms of assembly, oligomerizes as a right-handed, spiral filament on DNA at oriC.

The protein localises to the cytoplasm. Functionally, plays an essential role in the initiation and regulation of chromosomal replication. ATP-DnaA binds to the origin of replication (oriC) to initiate formation of the DNA replication initiation complex once per cell cycle. Binds the DnaA box (a 9 base pair repeat at the origin) and separates the double-stranded (ds)DNA. Forms a right-handed helical filament on oriC DNA; dsDNA binds to the exterior of the filament while single-stranded (ss)DNA is stabiized in the filament's interior. The ATP-DnaA-oriC complex binds and stabilizes one strand of the AT-rich DNA unwinding element (DUE), permitting loading of DNA polymerase. After initiation quickly degrades to an ADP-DnaA complex that is not apt for DNA replication. Binds acidic phospholipids. In Shigella boydii serotype 4 (strain Sb227), this protein is Chromosomal replication initiator protein DnaA.